A 640-amino-acid chain; its full sequence is Chaperone protein DnaK (640 aa).

The residue at position 198 (Thr-198) is a Phosphothreonine; by autocatalysis. The tract at residues 600-640 is disordered; the sequence is KTQGAGAEGGEQPHGEQEAGGAAKGEKVVDADFEEVKDDKK. The span at 630 to 640 shows a compositional bias: acidic residues; that stretch reads ADFEEVKDDKK.

Belongs to the heat shock protein 70 family.

In terms of biological role, acts as a chaperone. The sequence is that of Chaperone protein DnaK from Citrifermentans bemidjiense (strain ATCC BAA-1014 / DSM 16622 / JCM 12645 / Bem) (Geobacter bemidjiensis).